Here is a 115-residue protein sequence, read N- to C-terminus: Ribonuclease P protein component (115 aa).

The protein belongs to the RnpA family. As to quaternary structure, consists of a catalytic RNA component (M1 or rnpB) and a protein subunit.

It carries out the reaction Endonucleolytic cleavage of RNA, removing 5'-extranucleotides from tRNA precursor.. Functionally, RNaseP catalyzes the removal of the 5'-leader sequence from pre-tRNA to produce the mature 5'-terminus. It can also cleave other RNA substrates such as 4.5S RNA. The protein component plays an auxiliary but essential role in vivo by binding to the 5'-leader sequence and broadening the substrate specificity of the ribozyme. The protein is Ribonuclease P protein component of Blochmanniella pennsylvanica (strain BPEN).